Consider the following 220-residue polypeptide: Chloramphenicol acetyltransferase (220 aa).

Residue H195 is the Proton acceptor of the active site.

It belongs to the chloramphenicol acetyltransferase family. Homotrimer.

The catalysed reaction is chloramphenicol + acetyl-CoA = chloramphenicol 3-acetate + CoA. In terms of biological role, this enzyme is an effector of chloramphenicol resistance in bacteria. This Streptomyces acrimycini protein is Chloramphenicol acetyltransferase (cat).